The following is a 314-amino-acid chain: MKKKIAEYEVGEQVDIFLLIKTATKGIASNGKPFLTVILQDPSGDIEAKLWDVSPEVEKQYVAETIVKVAGDILNYKGRIQLRVKQIRVANENEVTDISDFVEKAPVKKEDMVEKITQYIFEMRNPNIQRLTRHLLNKHQNEFLDYPAATKNHHEFVSGLAYHVVSMLDLAKAISNLYPSLDKDLLYAGVILHDLGKVIELSGPISTTYTLEGNLLGHISIMVNEIGKAADELQIDAEEVLILQHIVLSHHGKAEWGSPKPPLVKEAEILHYIDNLDAKMNMMDRALGRTKPGEYTERVFALDNRSFYKPTFHN.

An HD domain is found at 163–279 (HVVSMLDLAK…LHYIDNLDAK (117 aa)).

Belongs to the YhaM family.

In terms of biological role, shows a 3'-5' exoribonuclease activity. This is 3'-5' exoribonuclease YhaM from Bacillus cereus (strain AH820).